Reading from the N-terminus, the 488-residue chain is Bifunctional protein HldE (488 aa).

A ribokinase region spans residues 1-330 (MIDFDGLSNA…RNILPPASLA (330 aa)). Residue 205–208 (NSKE) participates in ATP binding. Aspartate 275 is a catalytic residue. The segment at 358 to 488 (FTNGCFDILH…TSLVKRAGGA (131 aa)) is cytidylyltransferase.

It in the N-terminal section; belongs to the carbohydrate kinase PfkB family. This sequence in the C-terminal section; belongs to the cytidylyltransferase family. In terms of assembly, homodimer.

The catalysed reaction is D-glycero-beta-D-manno-heptose 7-phosphate + ATP = D-glycero-beta-D-manno-heptose 1,7-bisphosphate + ADP + H(+). The enzyme catalyses D-glycero-beta-D-manno-heptose 1-phosphate + ATP + H(+) = ADP-D-glycero-beta-D-manno-heptose + diphosphate. It functions in the pathway nucleotide-sugar biosynthesis; ADP-L-glycero-beta-D-manno-heptose biosynthesis; ADP-L-glycero-beta-D-manno-heptose from D-glycero-beta-D-manno-heptose 7-phosphate: step 1/4. It participates in nucleotide-sugar biosynthesis; ADP-L-glycero-beta-D-manno-heptose biosynthesis; ADP-L-glycero-beta-D-manno-heptose from D-glycero-beta-D-manno-heptose 7-phosphate: step 3/4. Catalyzes the phosphorylation of D-glycero-D-manno-heptose 7-phosphate at the C-1 position to selectively form D-glycero-beta-D-manno-heptose-1,7-bisphosphate. In terms of biological role, catalyzes the ADP transfer from ATP to D-glycero-beta-D-manno-heptose 1-phosphate, yielding ADP-D-glycero-beta-D-manno-heptose. This chain is Bifunctional protein HldE, found in Nitrobacter winogradskyi (strain ATCC 25391 / DSM 10237 / CIP 104748 / NCIMB 11846 / Nb-255).